Here is a 612-residue protein sequence, read N- to C-terminus: Alpha-glycerophosphate oxidase (612 aa).

Aspartate 21 to glutamate 49 contacts FAD. The segment covering valine 398–aspartate 408 has biased composition (basic and acidic residues). A disordered region spans residues valine 398 to phenylalanine 418.

It belongs to the FAD-dependent glycerol-3-phosphate dehydrogenase family. FAD is required as a cofactor.

Its subcellular location is the cytoplasm. It carries out the reaction sn-glycerol 3-phosphate + O2 = dihydroxyacetone phosphate + H2O2. The chain is Alpha-glycerophosphate oxidase (glpO) from Streptococcus pyogenes serotype M18 (strain MGAS8232).